A 131-amino-acid polypeptide reads, in one-letter code: Profilin-4 (131 aa).

The cysteines at positions 13 and 115 are disulfide-linked. An Involved in PIP2 interaction motif is present at residues 81–97 (AVIRGKKGAGGITVKKT). Phosphothreonine is present on Thr111.

The protein belongs to the profilin family. In terms of assembly, occurs in many kinds of cells as a complex with monomeric actin in a 1:1 ratio. Phosphorylated by MAP kinases.

It localises to the cytoplasm. The protein resides in the cytoskeleton. Binds to actin and affects the structure of the cytoskeleton. At high concentrations, profilin prevents the polymerization of actin, whereas it enhances it at low concentrations. In Olea europaea (Common olive), this protein is Profilin-4.